The chain runs to 455 residues: Mycosin-4 (455 aa).

The N-terminal stretch at 1-25 is a signal peptide; sequence MTTSRTLRLLVVSALATLSGLGTPV. The Peptidase S8 domain occupies 74 to 384; sequence SAQLADLDQV…NGTVDALAAV (311 aa). Residues Asp-98, His-129, and Ser-329 each act as charge relay system in the active site. A disordered region spans residues 389–417; it reads IPQAGTATSDPAPVAVPVPRRSTPGPSDR. Positions 394–412 are enriched in low complexity; that stretch reads TATSDPAPVAVPVPRRSTP. The helical transmembrane segment at 432–452 threads the bilayer; it reads LALMATLATASRRLRPGRNGI.

It belongs to the peptidase S8 family.

It localises to the cell membrane. This chain is Mycosin-4, found in Mycobacterium tuberculosis (strain ATCC 25618 / H37Rv).